Consider the following 336-residue polypeptide: Hdr-like menaquinol oxidoreductase cytochrome b-like subunit (336 aa).

A run of 6 helical transmembrane segments spans residues A4–I24, I60–F80, W102–L122, V145–L165, H184–I204, and L232–F252.

The protein localises to the cell membrane. Has menaquinol-oxidizing activity. The HmeC and HmeD subunits may together mediate electron transfer from menaquinol to an unidentified electron acceptor on the cytoplasmic side of the membrane. This Archaeoglobus profundus (strain DSM 5631 / JCM 9629 / NBRC 100127 / Av18) protein is Hdr-like menaquinol oxidoreductase cytochrome b-like subunit (hmeC).